We begin with the raw amino-acid sequence, 292 residues long: 4-hydroxybenzoate octaprenyltransferase (292 aa).

The next 8 membrane-spanning stretches (helical) occupy residues 20-40 (IGIL…ADGM), 43-63 (PMIL…GCAI), 94-114 (LLIA…LNLL), 135-155 (FFAM…PMAF), 160-180 (GTVP…VIAY), 209-229 (VAGI…AGIL), 234-254 (IWFY…YGMI), and 266-286 (FLHN…DTLF).

The protein belongs to the UbiA prenyltransferase family. The cofactor is Mg(2+).

The protein resides in the cell inner membrane. It catalyses the reaction all-trans-octaprenyl diphosphate + 4-hydroxybenzoate = 4-hydroxy-3-(all-trans-octaprenyl)benzoate + diphosphate. Its pathway is cofactor biosynthesis; ubiquinone biosynthesis. Its function is as follows. Catalyzes the prenylation of para-hydroxybenzoate (PHB) with an all-trans polyprenyl group. Mediates the second step in the final reaction sequence of ubiquinone-8 (UQ-8) biosynthesis, which is the condensation of the polyisoprenoid side chain with PHB, generating the first membrane-bound Q intermediate 3-octaprenyl-4-hydroxybenzoate. This Nitrosomonas europaea (strain ATCC 19718 / CIP 103999 / KCTC 2705 / NBRC 14298) protein is 4-hydroxybenzoate octaprenyltransferase.